Here is a 143-residue protein sequence, read N- to C-terminus: Transcriptional regulator MraZ (143 aa).

SpoVT-AbrB domains lie at 5-47 (EYQH…PQEE) and 76-119 (ASEC…SKSE).

The protein belongs to the MraZ family. In terms of assembly, forms oligomers.

It is found in the cytoplasm. Its subcellular location is the nucleoid. The chain is Transcriptional regulator MraZ from Listeria welshimeri serovar 6b (strain ATCC 35897 / DSM 20650 / CCUG 15529 / CIP 8149 / NCTC 11857 / SLCC 5334 / V8).